A 218-amino-acid chain; its full sequence is Lipoprotein-releasing system ATP-binding protein LolD (218 aa).

The ABC transporter domain maps to 2 to 218 (IKLEGITKSF…HMVDGTIKKD (217 aa)). Position 34 to 41 (34 to 41 (GPSGAGKT)) interacts with ATP.

The protein belongs to the ABC transporter superfamily. Lipoprotein translocase (TC 3.A.1.125) family. In terms of assembly, the complex is composed of two ATP-binding proteins (LolD) and two transmembrane proteins (LolC and LolE).

The protein resides in the cell inner membrane. Its function is as follows. Part of the ABC transporter complex LolCDE involved in the translocation of mature outer membrane-directed lipoproteins, from the inner membrane to the periplasmic chaperone, LolA. Responsible for the formation of the LolA-lipoprotein complex in an ATP-dependent manner. The polypeptide is Lipoprotein-releasing system ATP-binding protein LolD (Bacteroides thetaiotaomicron (strain ATCC 29148 / DSM 2079 / JCM 5827 / CCUG 10774 / NCTC 10582 / VPI-5482 / E50)).